The following is a 452-amino-acid chain: GPI mannosyltransferase 2 (452 aa).

Residues 1 to 7 are Cytoplasmic-facing; sequence MMEKVTK. A helical membrane pass occupies residues 8-28; that stretch reads LALTSRVMVLVVQLLANFATP. Residues 29-113 lie on the Lumenal side of the membrane; sequence DHKPDVFRMP…HLGIPLSRDA (85 aa). Residues 114–134 form a helical membrane-spanning segment; the sequence is LILLVAVALNVLIFCKTANVL. Residues 135 to 161 lie on the Cytoplasmic side of the membrane; that stretch reads YKLTQRMFNDHNKSWNAALIFCFNPAS. The chain crosses the membrane as a helical span at residues 162–182; the sequence is IFFSAAYSETFFAFASFSLML. Residues 183-209 are Lumenal-facing; it reads ECMRSEKDFRTFRLGAALTGCFVCRSN. The helical transmembrane segment at 210–230 threads the bilayer; it reads GLLTLGFPLYFLARHILLSTG. Over 231-238 the chain is Cytoplasmic; it reads SVQRCWQL. The helical transmembrane segment at 239 to 259 threads the bilayer; sequence FKMGLAMLVALGILHTYYFYI. Over 260–284 the chain is Lumenal; sequence YRLYCLPDVKVQHAQHVVDYAKERS. A helical membrane pass occupies residues 285–305; sequence FLISGQASVGSPWCGYTLPFP. At 306 to 327 the chain is on the cytoplasmic side; it reads YTYVQSHYWDVGFLRYYKWKQL. A helical transmembrane segment spans residues 328 to 348; the sequence is PNFLLALPMLLFMHWHCYDYI. Over 349–370 the chain is Lumenal; the sequence is RKLVANTWSKISPSEYQGILKE. Residues 371-391 form a helical membrane-spanning segment; sequence HISFPFVLHAAVLTLVCTLYV. At 392–398 the chain is on the cytoplasmic side; sequence HIQVSTR. A helical membrane pass occupies residues 399-419; that stretch reads LLASATPVFYWFAADYMPNTF. At 420–426 the chain is on the lumenal side; sequence QLSFRSK. A helical transmembrane segment spans residues 427–447; the sequence is AGVLFIWCLTYSLVGTVLFSN. Residues 448 to 452 are Cytoplasmic-facing; that stretch reads NYPWT.

It belongs to the PIGV family.

It localises to the endoplasmic reticulum membrane. It participates in glycolipid biosynthesis; glycosylphosphatidylinositol-anchor biosynthesis. In terms of biological role, mannosyltransferase involved in glycosylphosphatidylinositol-anchor biosynthesis. Transfers the second mannose to the glycosylphosphatidylinositol during GPI precursor assembly. Required for the GPI-mediated endoplasmic reticulum exit and proper targeting to the cell surface of chp. Required for GPI-mediated membrane attachment of chp, qsm and Cont. Essential for microvillar stability in the rhabdomere. This chain is GPI mannosyltransferase 2, found in Drosophila pseudoobscura pseudoobscura (Fruit fly).